The sequence spans 142 residues: Large ribosomal subunit protein uL13 (142 aa).

Belongs to the universal ribosomal protein uL13 family. Part of the 50S ribosomal subunit.

In terms of biological role, this protein is one of the early assembly proteins of the 50S ribosomal subunit, although it is not seen to bind rRNA by itself. It is important during the early stages of 50S assembly. In Shewanella frigidimarina (strain NCIMB 400), this protein is Large ribosomal subunit protein uL13.